We begin with the raw amino-acid sequence, 382 residues long: Per os infectivity factor 2 (382 aa).

As to quaternary structure, forms the PIF complex together with PIF1 and PIF3. The complex also interacts with per os infectivity factor PIF0.

Functionally, per os infectivity factor that mediates the specific binding of occluded virions (ODV) to the host midgut target cells. This Autographa californica nuclear polyhedrosis virus (AcMNPV) protein is Per os infectivity factor 2.